A 211-amino-acid polypeptide reads, in one-letter code: ATP phosphoribosyltransferase (211 aa).

The protein belongs to the ATP phosphoribosyltransferase family. Short subfamily. Heteromultimer composed of HisG and HisZ subunits.

The protein resides in the cytoplasm. It carries out the reaction 1-(5-phospho-beta-D-ribosyl)-ATP + diphosphate = 5-phospho-alpha-D-ribose 1-diphosphate + ATP. The protein operates within amino-acid biosynthesis; L-histidine biosynthesis; L-histidine from 5-phospho-alpha-D-ribose 1-diphosphate: step 1/9. Functionally, catalyzes the condensation of ATP and 5-phosphoribose 1-diphosphate to form N'-(5'-phosphoribosyl)-ATP (PR-ATP). Has a crucial role in the pathway because the rate of histidine biosynthesis seems to be controlled primarily by regulation of HisG enzymatic activity. This is ATP phosphoribosyltransferase from Pseudomonas aeruginosa (strain UCBPP-PA14).